The chain runs to 301 residues: Ribosomal protein L11 methyltransferase (301 aa).

S-adenosyl-L-methionine is bound by residues threonine 146, glycine 167, aspartate 189, and asparagine 234.

The protein belongs to the methyltransferase superfamily. PrmA family.

It localises to the cytoplasm. The enzyme catalyses L-lysyl-[protein] + 3 S-adenosyl-L-methionine = N(6),N(6),N(6)-trimethyl-L-lysyl-[protein] + 3 S-adenosyl-L-homocysteine + 3 H(+). Functionally, methylates ribosomal protein L11. The sequence is that of Ribosomal protein L11 methyltransferase from Acinetobacter baumannii (strain AB307-0294).